Reading from the N-terminus, the 193-residue chain is Ion-translocating oxidoreductase complex subunit A (193 aa).

A run of 6 helical transmembrane segments spans residues 5 to 25 (ILLIISTALINNFVLVKFLGL), 39 to 59 (IGMGLATMFVLTVASLCAYLV), 72 to 92 (LRTLIFILVIAVVVQFTEMVI), 102 to 122 (LLGIFLPLITTNCAVLGVALL), 134 to 154 (VIYGFSASLGFSLVLVLFAAL), and 171 to 191 (SIALITAGLMSLAFMGFSGLV).

Belongs to the NqrDE/RnfAE family. In terms of assembly, the complex is composed of six subunits: RnfA, RnfB, RnfC, RnfD, RnfE and RnfG.

The protein localises to the cell inner membrane. In terms of biological role, part of a membrane-bound complex that couples electron transfer with translocation of ions across the membrane. The protein is Ion-translocating oxidoreductase complex subunit A of Histophilus somni (strain 129Pt) (Haemophilus somnus).